Here is a 284-residue protein sequence, read N- to C-terminus: Aspartate dehydrogenase domain-containing protein (284 aa).

The protein belongs to the L-aspartate dehydrogenase family.

The polypeptide is Aspartate dehydrogenase domain-containing protein (aspdh) (Xenopus tropicalis (Western clawed frog)).